The following is a 382-amino-acid chain: Mannitol-1-phosphate 5-dehydrogenase (382 aa).

NAD(+) is bound at residue 3–14 (ALHFGAGNIGRG).

It belongs to the mannitol dehydrogenase family.

It catalyses the reaction D-mannitol 1-phosphate + NAD(+) = beta-D-fructose 6-phosphate + NADH + H(+). This chain is Mannitol-1-phosphate 5-dehydrogenase, found in Mannheimia succiniciproducens (strain KCTC 0769BP / MBEL55E).